We begin with the raw amino-acid sequence, 377 residues long: Delta(12) fatty acid desaturase DES8.11 (377 aa).

The next 2 membrane-spanning stretches (helical) occupy residues leucine 55–proline 75 and leucine 79–glycine 99. Residues histidine 100–histidine 104 carry the Histidine box-1 motif. The helical transmembrane segment at leucine 112–tryptophan 132 threads the bilayer. The Histidine box-2 motif lies at histidine 136–histidine 140. Helical transmembrane passes span valine 174–serine 194, valine 220–alanine 240, and alanine 244–isoleucine 264. The short motif at histidine 310 to histidine 314 is the Histidine box-3 element.

The protein belongs to the fatty acid desaturase type 1 family.

Its subcellular location is the membrane. It participates in lipid metabolism; polyunsaturated fatty acid biosynthesis. Its function is as follows. Converts linoleic acid into a conjugated octadecatrienoic acid, probably calendic acid. This Calendula officinalis (Pot marigold) protein is Delta(12) fatty acid desaturase DES8.11.